The primary structure comprises 481 residues: ATP synthase subunit beta (481 aa).

Gly160–Thr167 is an ATP binding site.

The protein belongs to the ATPase alpha/beta chains family. F-type ATPases have 2 components, CF(1) - the catalytic core - and CF(0) - the membrane proton channel. CF(1) has five subunits: alpha(3), beta(3), gamma(1), delta(1), epsilon(1). CF(0) has three main subunits: a(1), b(2) and c(9-12). The alpha and beta chains form an alternating ring which encloses part of the gamma chain. CF(1) is attached to CF(0) by a central stalk formed by the gamma and epsilon chains, while a peripheral stalk is formed by the delta and b chains.

It localises to the cell inner membrane. The catalysed reaction is ATP + H2O + 4 H(+)(in) = ADP + phosphate + 5 H(+)(out). Produces ATP from ADP in the presence of a proton gradient across the membrane. The catalytic sites are hosted primarily by the beta subunits. The polypeptide is ATP synthase subunit beta (Anaeromyxobacter sp. (strain Fw109-5)).